The primary structure comprises 1009 residues: DNA ligase 4 (1009 aa).

Disordered regions lie at residues 1–34 (METD…APTL) and 51–72 (KKKP…LSAA). The span at 51–65 (KKKPVGPAGNRRKAG) shows a compositional bias: basic residues. Glu-315, Lys-317, Leu-318, Arg-322, Glu-384, Phe-424, Glu-484, Lys-489, Lys-506, and Lys-508 together coordinate ATP. The active-site N6-AMP-lysine intermediate is Lys-317. Glu-384 is a binding site for Mg(2+). Glu-484 contributes to the Mg(2+) binding site. BRCT domains follow at residues 715-808 (PSGH…PDLL) and 887-995 (PCGW…QHMP).

This sequence belongs to the ATP-dependent DNA ligase family. Mg(2+) serves as cofactor.

Its subcellular location is the nucleus. It carries out the reaction ATP + (deoxyribonucleotide)n-3'-hydroxyl + 5'-phospho-(deoxyribonucleotide)m = (deoxyribonucleotide)n+m + AMP + diphosphate.. Functionally, DNA ligase involved in DNA non-homologous end joining (NHEJ); required for double-strand break (DSB) repair. The chain is DNA ligase 4 (lig4) from Emericella nidulans (strain FGSC A4 / ATCC 38163 / CBS 112.46 / NRRL 194 / M139) (Aspergillus nidulans).